The following is a 300-amino-acid chain: Erythroblast NAD(P)(+)--arginine ADP-ribosyltransferase (300 aa).

An N-terminal signal peptide occupies residues 1-22; sequence MEEPLLHAILGLVLLLSTRTDA. Intrachain disulfides connect Cys51–Cys260 and Cys159–Cys208. A TR mART core domain is found at 70-256; the sequence is ETFAEGWRSA…IQLRSQGKSS (187 aa). Positions 107, 164, and 183 each coordinate NAD(+). Arg164 is a catalytic residue. Ser186 is an active-site residue. Position 217 (Ser217) interacts with NAD(+). The active site involves Glu224. Positions 276–300 are disordered; it reads SADKSSPLPRSPWPGWAPLAAPHSH.

This sequence belongs to the Arg-specific ADP-ribosyltransferase family.

The enzyme catalyses L-arginyl-[protein] + NAD(+) = N(omega)-(ADP-D-ribosyl)-L-arginyl-[protein] + nicotinamide + H(+). The sequence is that of Erythroblast NAD(P)(+)--arginine ADP-ribosyltransferase (MADPRT) from Gallus gallus (Chicken).